The chain runs to 363 residues: Somatostatin receptor type 5 (363 aa).

Over 1 to 35 the chain is Extracellular; it reads MEPLSLASTPSWNASAASSGNHNWSLVGSASPMGA. N-linked (GlcNAc...) asparagine glycans are attached at residues Asn-13 and Asn-23. The chain crosses the membrane as a helical span at residues 36–63; the sequence is RAVLVPVLYLLVCTVGLSGNTLVIYVVL. At 64 to 73 the chain is on the cytoplasmic side; sequence RHAKMKTVTN. A helical transmembrane segment spans residues 74-99; sequence VYILNLAVADVLFMLGLPFLATQNAV. The Extracellular segment spans residues 100–111; that stretch reads VSYWPFGSFLCR. Cys-110 and Cys-185 are oxidised to a cystine. Residues 112-133 traverse the membrane as a helical segment; that stretch reads LVMTLDGINQFTSIFCLMVMSV. At 134 to 155 the chain is on the cytoplasmic side; that stretch reads DRYLAVVHPLRSARWRRPRVAK. The helical transmembrane segment at 156–176 threads the bilayer; the sequence is MASAAVWVFSLLMSLPLLVFA. Over 177–196 the chain is Extracellular; it reads DVQEGWGTCNLSWPEPVGLW. Asn-186 carries N-linked (GlcNAc...) asparagine glycosylation. Residues 197–221 traverse the membrane as a helical segment; sequence GAAFITYTSVLGFFGPLLVICLCYL. The Cytoplasmic segment spans residues 222 to 247; that stretch reads LIVVKVKAAGMRVGSSRRRRSEPKVT. A helical membrane pass occupies residues 248 to 273; sequence RMVVVVVLVFVGCWLPFFIVNIVNLA. The Extracellular segment spans residues 274–283; that stretch reads FTLPEEPTSA. The chain crosses the membrane as a helical span at residues 284–308; the sequence is GLYFFVVVLSYANSCANPLLYGFLS. The Cytoplasmic portion of the chain corresponds to 309-363; it reads DNFRQSFRKVLCLRRGYGMEDADAIEPRPDKSGRPQATLPTRSCEANGLMQTSRI. Cys-320 carries the S-palmitoyl cysteine; by ZDHHC5 lipid modification. Residues 331 to 363 form a disordered region; the sequence is DAIEPRPDKSGRPQATLPTRSCEANGLMQTSRI.

This sequence belongs to the G-protein coupled receptor 1 family. Heterodimer with SSTR2. Heterodimerization with SSTR2 increases cell growth inhibition activity of SSTR2. Palmitoylated at Cys-320 by ZDHHC5, but not ZDHHC8. Palmitoylation creates an additional intracellular loop which is thought to be important for efficient coupling to G-proteins and may target the protein to lipid rafts. In terms of tissue distribution, prominent in the pituitary and small intestine. Low levels in islets and spleen. Not detected in kidney, pancreas, cerebellum, or cortex.

It localises to the cell membrane. Receptor for somatostatin-28. The activity of this receptor is mediated by G proteins which inhibit adenylyl cyclase. Increases cell growth inhibition activity of SSTR2 following heterodimerization. This Rattus norvegicus (Rat) protein is Somatostatin receptor type 5 (Sstr5).